Reading from the N-terminus, the 238-residue chain is tRNA (guanine-N(7)-)-methyltransferase (238 aa).

S-adenosyl-L-methionine contacts are provided by Glu-68, Glu-93, Asp-120, and Asp-143. The active site involves Asp-143. Residues Lys-147, Asp-179, and 216–219 (TKFE) contribute to the substrate site.

This sequence belongs to the class I-like SAM-binding methyltransferase superfamily. TrmB family.

It carries out the reaction guanosine(46) in tRNA + S-adenosyl-L-methionine = N(7)-methylguanosine(46) in tRNA + S-adenosyl-L-homocysteine. Its pathway is tRNA modification; N(7)-methylguanine-tRNA biosynthesis. Its function is as follows. Catalyzes the formation of N(7)-methylguanine at position 46 (m7G46) in tRNA. The polypeptide is tRNA (guanine-N(7)-)-methyltransferase (Shewanella sp. (strain W3-18-1)).